Consider the following 160-residue polypeptide: uncharacterized protein (160 aa).

The helical transmembrane segment at 8–28 (LLFILVFISGFILFTVYSYTA) threads the bilayer.

Its subcellular location is the membrane. This is an uncharacterized protein from Escherichia coli (strain K12).